Here is a 453-residue protein sequence, read N- to C-terminus: Homogentisate 1,2-dioxygenase (453 aa).

Residue His306 is the Proton acceptor of the active site. Fe cation-binding residues include His349 and Glu355. 2 residues coordinate homogentisate: Tyr364 and His385. A Fe cation-binding site is contributed by His385.

Belongs to the homogentisate dioxygenase family. As to quaternary structure, hexamer; dimer of trimers. The cofactor is Fe cation.

It catalyses the reaction homogentisate + O2 = 4-maleylacetoacetate + H(+). It functions in the pathway amino-acid degradation; L-phenylalanine degradation; acetoacetate and fumarate from L-phenylalanine: step 4/6. In terms of biological role, involved in the catabolism of homogentisate (2,5-dihydroxyphenylacetate or 2,5-OH-PhAc), a central intermediate in the degradation of phenylalanine and tyrosine. Catalyzes the oxidative ring cleavage of the aromatic ring of homogentisate to yield maleylacetoacetate. The chain is Homogentisate 1,2-dioxygenase from Rhizobium etli (strain ATCC 51251 / DSM 11541 / JCM 21823 / NBRC 15573 / CFN 42).